We begin with the raw amino-acid sequence, 464 residues long: 3-deoxy-D-manno-octulosonic acid transferase (464 aa).

A helical; Signal-anchor membrane pass occupies residues 2-22 (MLLYYALSFILLPVYFIIILI). The region spanning 47 to 93 (DSLDFMQTSANKEEFKGDTSLRTTTYTLIREDEGLGSTYKLPLEASD) is the RPE1 insert domain. E107 acts as the Proton acceptor in catalysis. Residues 311–312 (PR), 352–354 (FGE), and 377–380 (NILE) each bind CMP.

It belongs to the glycosyltransferase group 1 family. Glycosyltransferase 30 subfamily.

It localises to the cell inner membrane. It carries out the reaction lipid IVA (E. coli) + CMP-3-deoxy-beta-D-manno-octulosonate = alpha-Kdo-(2-&gt;6)-lipid IVA (E. coli) + CMP + H(+). The protein operates within bacterial outer membrane biogenesis; LPS core biosynthesis. Involved in lipopolysaccharide (LPS) biosynthesis. Catalyzes the transfer of 3-deoxy-D-manno-octulosonate (Kdo) residue(s) from CMP-Kdo to lipid IV(A), the tetraacyldisaccharide-1,4'-bisphosphate precursor of lipid A. The chain is 3-deoxy-D-manno-octulosonic acid transferase (waaA) from Rickettsia conorii (strain ATCC VR-613 / Malish 7).